The primary structure comprises 248 residues: MNQTNFGFKKIKANEKQSLVNSVFSNVADKYDLMNDLMSFGMHRLWKDEFIRQIPNLNSNILDVASGSGDIALKLAKKAKDRGSNISLTLSDINEEMLRQAKKKSIDLNLFQNLKFTVASAEELPFPDNSFDYYTIAFGIRNVPDINKALKEAYRVLKPMGKFICLEFSKVKESLLQDFYKFYSFNVIPKIGQIITGNKEAYDYLVESIDLFPSQDEFRIMIKEAGFEEINYKNLSGGIVAIHSAYKL.

S-adenosyl-L-methionine-binding residues include Ser68 and Asp92.

It belongs to the class I-like SAM-binding methyltransferase superfamily. MenG/UbiE family.

The catalysed reaction is a 2-demethylmenaquinol + S-adenosyl-L-methionine = a menaquinol + S-adenosyl-L-homocysteine + H(+). It carries out the reaction a 2-methoxy-6-(all-trans-polyprenyl)benzene-1,4-diol + S-adenosyl-L-methionine = a 5-methoxy-2-methyl-3-(all-trans-polyprenyl)benzene-1,4-diol + S-adenosyl-L-homocysteine + H(+). It participates in quinol/quinone metabolism; menaquinone biosynthesis; menaquinol from 1,4-dihydroxy-2-naphthoate: step 2/2. The protein operates within cofactor biosynthesis; ubiquinone biosynthesis. In terms of biological role, methyltransferase required for the conversion of demethylmenaquinol (DMKH2) to menaquinol (MKH2) and the conversion of 2-polyprenyl-6-methoxy-1,4-benzoquinol (DDMQH2) to 2-polyprenyl-3-methyl-6-methoxy-1,4-benzoquinol (DMQH2). The chain is Ubiquinone/menaquinone biosynthesis C-methyltransferase UbiE from Rickettsia bellii (strain RML369-C).